Reading from the N-terminus, the 305-residue chain is UDP-3-O-acyl-N-acetylglucosamine deacetylase (305 aa).

Residues histidine 78, histidine 237, and aspartate 241 each coordinate Zn(2+). Catalysis depends on histidine 264, which acts as the Proton donor.

Belongs to the LpxC family. It depends on Zn(2+) as a cofactor.

It catalyses the reaction a UDP-3-O-[(3R)-3-hydroxyacyl]-N-acetyl-alpha-D-glucosamine + H2O = a UDP-3-O-[(3R)-3-hydroxyacyl]-alpha-D-glucosamine + acetate. It participates in glycolipid biosynthesis; lipid IV(A) biosynthesis; lipid IV(A) from (3R)-3-hydroxytetradecanoyl-[acyl-carrier-protein] and UDP-N-acetyl-alpha-D-glucosamine: step 2/6. Catalyzes the hydrolysis of UDP-3-O-myristoyl-N-acetylglucosamine to form UDP-3-O-myristoylglucosamine and acetate, the committed step in lipid A biosynthesis. This chain is UDP-3-O-acyl-N-acetylglucosamine deacetylase, found in Burkholderia cenocepacia (strain HI2424).